A 253-amino-acid polypeptide reads, in one-letter code: Ice-binding protein (253 aa).

An N-terminal signal peptide occupies residues 1–27; the sequence is MKTLISNSKKVLIPLIMGSIFAGNVMA. C75 and C93 form a disulfide bridge. Short sequence motifs (ice-binding site motif (T-A/G-X-T/N)) lie at residues 220 to 223 and 232 to 235; these read TGTT and TAVT.

Belongs to the ice-binding protein family.

Its subcellular location is the secreted. Binds to the surface of ice crystals and inhibits their growth. Has ice recrystallization inhibition (RI) activity (the ability to prevent the formation of larger grains of ice at the expense of smaller grains), which may protect membranes from freezing injury. Has high thermal hysteresis (TH) activity, which is the ability to lower the freezing point of an aqueous solution below its melting point, and thus the freezing of the cell fluid can be prevented protecting the organism from ice damage. The TH activity of this protein is 3.8 degrees Celsius at 14 mM. The polypeptide is Ice-binding protein (Colwellia sp).